Consider the following 560-residue polypeptide: Membrane protein insertase YidC (560 aa).

6 consecutive transmembrane segments (helical) span residues 5-25, 334-354, 357-377, 431-451, 476-496, and 522-542; these read IINL…WQYF, AIDF…MNFF, YVGN…LLMF, LPIL…YVTI, LFGL…WPIL, and FMPL…LIYW.

The protein belongs to the OXA1/ALB3/YidC family. Type 1 subfamily. In terms of assembly, interacts with the Sec translocase complex via SecD. Specifically interacts with transmembrane segments of nascent integral membrane proteins during membrane integration.

It is found in the cell inner membrane. Functionally, required for the insertion and/or proper folding and/or complex formation of integral membrane proteins into the membrane. Involved in integration of membrane proteins that insert both dependently and independently of the Sec translocase complex, as well as at least some lipoproteins. Aids folding of multispanning membrane proteins. The protein is Membrane protein insertase YidC of Rickettsia felis (strain ATCC VR-1525 / URRWXCal2) (Rickettsia azadi).